The chain runs to 493 residues: Neuronal acetylcholine receptor subunit alpha-6 (493 aa).

Positions 1–30 are cleaved as a signal peptide; that stretch reads MLNGWGRGDLRSGLCLWICGFLAFFKGSRG. Residues 31–240 lie on the Extracellular side of the membrane; it reads CVSEEQLFHT…TYSFYIRRLP (210 aa). N-linked (GlcNAc...) asparagine glycans are attached at residues N54 and N171. Cystine bridges form between C158–C172 and C222–C223. The next 3 helical transmembrane spans lie at 241 to 265, 272 to 290, and 306 to 327; these read MFYT…FYLP, VTLC…LVIT, and YLLF…VLNI. At 328 to 464 the chain is on the cytoplasmic side; that stretch reads HYRTPATHTM…WKYMAMVVDR (137 aa). A Phosphoserine modification is found at S401. Residues 465–484 form a helical membrane-spanning segment; that stretch reads VFLWVFIIVCVFGTVGLFLQ.

The protein belongs to the ligand-gated ion channel (TC 1.A.9) family. Acetylcholine receptor (TC 1.A.9.1) subfamily. Alpha-6/CHRNA6 sub-subfamily. In terms of assembly, neuronal AChR is composed of two different types of subunits: alpha and non-alpha (beta). CHRNA6/alpha-6 subunit can be combined to CHRNB2/beta-2 and CHRNA4/alpha-4 to give rise to functional receptors. Interacts with LYPD6. Predominantly expressed in only a few brain areas, including dopaminergic neurons, norepirephrine neurons and cells of the visual system.

It localises to the synaptic cell membrane. It catalyses the reaction Ca(2+)(in) = Ca(2+)(out). It carries out the reaction K(+)(in) = K(+)(out). The catalysed reaction is Na(+)(in) = Na(+)(out). Activated by a myriad of ligands such as acetylcholine, cytisine and nicotine. CHRNA6 nAChR activity is inhibited by the antagonists alpha-conotoxin MII and PIA, a small disulfide-constrained peptides from cone snails. Its function is as follows. Component of neuronal acetylcholine receptors (nAChRs) that function as pentameric, ligand-gated cation channels with high calcium permeability among other activities. nAChRs are excitatory neurotrasnmitter receptors formed by a collection of nAChR subunits known to mediate synaptic transmission in the nervous system and the neuromuscular junction. Each nAchR subunit confers differential attributes to channel properties, including activation, deactivation and desensitization kinetics, pH sensitivity, cation permeability, and binding to allosteric modulators. CHRNA6 forms pentameric channels with CHRNB2 and CHRNA4 that exhibit high sensitivity to ACh and nicotine and are predominantly expressed in only a few brain areas, including dopaminergic neurons, norepirephrine neurons and cells of the visual system. nAChrs containing CHRNA6 subunits mediate endogenous cholinergic modulation of dopamine and gamma-aminobutyric acid (GABA) release in response to nicotine at nerve terminals. This is Neuronal acetylcholine receptor subunit alpha-6 (Chrna6) from Rattus norvegicus (Rat).